Consider the following 834-residue polypeptide: DNA gyrase subunit A (834 aa).

The region spanning 53–520 (LPDVRDGLKP…NDTEIDEEDL (468 aa)) is the Topo IIA-type catalytic domain. The O-(5'-phospho-DNA)-tyrosine intermediate role is filled by tyrosine 141. Residues 547–553 (QGRGGVG) carry the GyrA-box motif.

This sequence belongs to the type II topoisomerase GyrA/ParC subunit family. In terms of assembly, heterotetramer, composed of two GyrA and two GyrB chains. In the heterotetramer, GyrA contains the active site tyrosine that forms a transient covalent intermediate with DNA, while GyrB binds cofactors and catalyzes ATP hydrolysis.

It localises to the cytoplasm. The catalysed reaction is ATP-dependent breakage, passage and rejoining of double-stranded DNA.. Functionally, a type II topoisomerase that negatively supercoils closed circular double-stranded (ds) DNA in an ATP-dependent manner to modulate DNA topology and maintain chromosomes in an underwound state. Negative supercoiling favors strand separation, and DNA replication, transcription, recombination and repair, all of which involve strand separation. Also able to catalyze the interconversion of other topological isomers of dsDNA rings, including catenanes and knotted rings. Type II topoisomerases break and join 2 DNA strands simultaneously in an ATP-dependent manner. In Brachyspira hyodysenteriae (strain ATCC 49526 / WA1), this protein is DNA gyrase subunit A.